The primary structure comprises 473 residues: UDP-N-acetylmuramate--L-alanine ligase (473 aa).

Position 123–129 (123–129 (GTHGKTT)) interacts with ATP.

The protein belongs to the MurCDEF family.

Its subcellular location is the cytoplasm. The catalysed reaction is UDP-N-acetyl-alpha-D-muramate + L-alanine + ATP = UDP-N-acetyl-alpha-D-muramoyl-L-alanine + ADP + phosphate + H(+). Its pathway is cell wall biogenesis; peptidoglycan biosynthesis. Functionally, cell wall formation. The polypeptide is UDP-N-acetylmuramate--L-alanine ligase (Marinomonas sp. (strain MWYL1)).